A 741-amino-acid polypeptide reads, in one-letter code: Methionine--tRNA ligase (741 aa).

The span at 1 to 22 (MTMKQYTMSKMNAETQTQTRES) shows a compositional bias: polar residues. The disordered stretch occupies residues 1–25 (MTMKQYTMSKMNAETQTQTRESFPT). A 'HIGH' region motif is present at residues 36-46 (PYANGDLHIGH). Residues Cys-167, Cys-170, Cys-179, and Cys-183 each coordinate Zn(2+). The interval 309–329 (VRSHSSSSAKDSSEGNSPSNI) is disordered. Positions 311-329 (SHSSSSAKDSSEGNSPSNI) are enriched in low complexity. ATP is bound at residue Thr-381. Residues 591–629 (KLADRVTDPTDDDDSDTDTETGTDVAETTNESHSESNMT) are disordered. Positions 599 to 611 (PTDDDDSDTDTET) are enriched in acidic residues. A compositionally biased stretch (polar residues) spans 616-629 (AETTNESHSESNMT). Positions 643–741 (EFEELDLRVA…EDADPGTSIQ (99 aa)) constitute a tRNA-binding domain.

The protein belongs to the class-I aminoacyl-tRNA synthetase family. MetG type 1 subfamily. As to quaternary structure, homodimer. It depends on Zn(2+) as a cofactor.

The protein resides in the cytoplasm. It carries out the reaction tRNA(Met) + L-methionine + ATP = L-methionyl-tRNA(Met) + AMP + diphosphate. Functionally, is required not only for elongation of protein synthesis but also for the initiation of all mRNA translation through initiator tRNA(fMet) aminoacylation. The protein is Methionine--tRNA ligase of Haloquadratum walsbyi (strain DSM 16790 / HBSQ001).